A 1244-amino-acid chain; its full sequence is SWI/SNF chromatin remodeling complex subunit swsn-7 (1244 aa).

One can recognise an ARID domain in the interval 24–116 (QRKMAEFYNS…YLSKFEQVET (93 aa)). The span at 486–496 (FTQGSNQQQNP) shows a compositional bias: polar residues. Disordered regions lie at residues 486–534 (FTQG…GAAP), 556–583 (NREQ…ILAH), and 597–619 (DRRT…ESQL). Positions 497–508 (HHSQGGHQLGHS) are enriched in low complexity. Positions 556–566 (NREQYSTQSSQ) are enriched in polar residues. Residues 567–578 (PHPPHTNVPPSP) show a composition bias toward pro residues. The segment covering 610-619 (PSTNSGESQL) has biased composition (polar residues). Residues 623–697 (TEKWIRQNCV…IVAQGIRLIR (75 aa)) constitute a DNA-binding region (RFX-type winged-helix). Positions 1134–1244 (EEEQQKMLSE…TTPVRAGAGI (111 aa)) are disordered. Over residues 1142–1158 (SEVPSSASLSSMAGSSS) the composition is skewed to low complexity. Polar residues-rich tracts occupy residues 1159–1186 (QLPT…SNKP) and 1194–1212 (LNFS…FTAG). The segment covering 1220-1231 (PIQQHIPSQPSP) has biased composition (low complexity).

As to quaternary structure, component of the SWI/SNF-B (PBAF) chromatin remodeling complex.

It is found in the nucleus. Functionally, involved in transcriptional activation and repression of select genes by chromatin remodeling (alteration of DNA-nucleosome topology). Required for the stability of the SWI/SNF chromatin remodeling complex SWI/SNF-B (PBAF). Required for regulation of a stress response gene network, probably as part of the PBAF complex and perhaps acting in concert with histone demethylase jmjc-1. Binds to the ethanol and stress response elements (ESRE) in the promoter regions of hsp-16.1 and hsp-16.2, probably as part of the PBAF complex. The chain is SWI/SNF chromatin remodeling complex subunit swsn-7 from Caenorhabditis elegans.